The chain runs to 376 residues: CYP enzymes assisting alcohol dehydrogenase (376 aa).

Cys43, Thr45, His64, Cys94, Cys97, Cys100, Cys108, and Cys173 together coordinate Zn(2+). Thr45 serves as a coordination point for NAD(+). Thr45 and His64 together coordinate substrate. NAD(+) contacts are provided by residues 199-204 (GLGAVG), Asp223, Lys228, 294-296 (LGA), Phe320, and Lys371.

The protein belongs to the zinc-containing alcohol dehydrogenase family. Class-III subfamily. As to quaternary structure, homodimer. Zn(2+) is required as a cofactor.

It participates in alkaloid biosynthesis. Its function is as follows. May be a positive catalyzer of strictosidine production by assisting secologanin biosynthesis, thus being involved in monoterpene indole alkaloids accumulation. The protein is CYP enzymes assisting alcohol dehydrogenase of Catharanthus roseus (Madagascar periwinkle).